A 115-amino-acid chain; its full sequence is Large ribosomal subunit protein uL22 (115 aa).

Belongs to the universal ribosomal protein uL22 family. In terms of assembly, part of the 50S ribosomal subunit.

Functionally, this protein binds specifically to 23S rRNA; its binding is stimulated by other ribosomal proteins, e.g. L4, L17, and L20. It is important during the early stages of 50S assembly. It makes multiple contacts with different domains of the 23S rRNA in the assembled 50S subunit and ribosome. Its function is as follows. The globular domain of the protein is located near the polypeptide exit tunnel on the outside of the subunit, while an extended beta-hairpin is found that lines the wall of the exit tunnel in the center of the 70S ribosome. This is Large ribosomal subunit protein uL22 from Streptomyces griseus subsp. griseus (strain JCM 4626 / CBS 651.72 / NBRC 13350 / KCC S-0626 / ISP 5235).